The chain runs to 360 residues: Aminomethyltransferase (360 aa).

The protein belongs to the GcvT family. In terms of assembly, the glycine cleavage system is composed of four proteins: P, T, L and H.

It catalyses the reaction N(6)-[(R)-S(8)-aminomethyldihydrolipoyl]-L-lysyl-[protein] + (6S)-5,6,7,8-tetrahydrofolate = N(6)-[(R)-dihydrolipoyl]-L-lysyl-[protein] + (6R)-5,10-methylene-5,6,7,8-tetrahydrofolate + NH4(+). The glycine cleavage system catalyzes the degradation of glycine. The polypeptide is Aminomethyltransferase (Exiguobacterium sibiricum (strain DSM 17290 / CCUG 55495 / CIP 109462 / JCM 13490 / 255-15)).